The sequence spans 243 residues: METKFSDVINGLKEWYDEYLKLYPEYKNFLTLLEIVSEEGPDKAIDNEEFNKLVINAVTKQPKIYKIYLTSDDGIYPLPTWNSDVYVEHFEQYYIDRIVFSRKYRHNRDFLIGLTEYYGSLVGLTKIAIDAVVSDYVREQLGIYHMSLDKALQLNLSIPINTLLDRIRNNYKVPIIKEMDEENPVVPEERPKSNNEPTYRQMINEYQEKAPVEIKLTPEEIEEEITRRILDETIEDEYDEIES.

This is an uncharacterized protein from Acidianus bottle-shaped virus (isolate Italy/Pozzuoli) (ABV).